A 1021-amino-acid polypeptide reads, in one-letter code: Transmembrane protein 132A (1021 aa).

The first 32 residues, 1–32, serve as a signal peptide directing secretion; it reads MTERAAAAPRGPYGAWLCLLVALALEVVRVGS. Topologically, residues 33 to 848 are extracellular; it reads NQNTLDPIYL…VTDLELGMYA (816 aa). Residues 207–226 are disordered; that stretch reads PAGEGPGGCGPGTEEEPKEQ. Residue Asn276 is glycosylated (N-linked (GlcNAc...) asparagine). The binds to HSPA5/GRP78 stretch occupies residues 606-913; the sequence is IEVRSPLSDS…QLDRCSSSSP (308 aa). The segment at 666–1021 is confers cellular localization similar to full-length form; the sequence is LPAPKQEVAL…NYMERIRGSS (356 aa). The tract at residues 793 to 835 is disordered; that stretch reads AGDMGSHVGPGIRGKFERAEEEAGKEENEAKEEEEDEEEMVPA. The span at 806–820 shows a compositional bias: basic and acidic residues; it reads GKFERAEEEAGKEEN. The span at 821 to 832 shows a compositional bias: acidic residues; sequence EAKEEEEDEEEM. The chain crosses the membrane as a helical span at residues 849–869; the sequence is LLGIFCLAFLIFLVNGVVFVL. Residues 870–1021 lie on the Cytoplasmic side of the membrane; it reads RYQRKEPPDS…NYMERIRGSS (152 aa). Residues 903–955 form a disordered region; it reads RQLDRCSSSSPPKGEGGCPCESGAGGDTSTVAPSASESPAGSTSTLARKEAGG. The segment covering 929 to 948 has biased composition (polar residues); it reads DTSTVAPSASESPAGSTSTL.

Belongs to the TMEM132 family. As to quaternary structure, interacts with HSPA5/GRP78. Expressed in the brain in neuronal cells of the hypothalamus, thalamus, cerebral cortex, amygdala, and cerebellum.

It is found in the golgi apparatus membrane. Its subcellular location is the endoplasmic reticulum membrane. Its function is as follows. May play a role in embryonic and postnatal development of the brain. Increased resistance to cell death induced by serum starvation in cultured cells. Regulates cAMP-induced GFAP gene expression via STAT3 phosphorylation. The polypeptide is Transmembrane protein 132A (Tmem132a) (Rattus norvegicus (Rat)).